Here is a 166-residue protein sequence, read N- to C-terminus: NADH-quinone oxidoreductase subunit B (166 aa).

[4Fe-4S] cluster is bound by residues Cys-44, Cys-45, Cys-110, and Cys-140.

It belongs to the complex I 20 kDa subunit family. NDH-1 is composed of 14 different subunits. Subunits NuoB, C, D, E, F, and G constitute the peripheral sector of the complex. Requires [4Fe-4S] cluster as cofactor.

The protein localises to the cell membrane. The enzyme catalyses a quinone + NADH + 5 H(+)(in) = a quinol + NAD(+) + 4 H(+)(out). In terms of biological role, NDH-1 shuttles electrons from NADH, via FMN and iron-sulfur (Fe-S) centers, to quinones in the respiratory chain. The immediate electron acceptor for the enzyme in this species is believed to be a menaquinone. Couples the redox reaction to proton translocation (for every two electrons transferred, four hydrogen ions are translocated across the cytoplasmic membrane), and thus conserves the redox energy in a proton gradient. The protein is NADH-quinone oxidoreductase subunit B of Carboxydothermus hydrogenoformans (strain ATCC BAA-161 / DSM 6008 / Z-2901).